Here is a 128-residue protein sequence, read N- to C-terminus: Probable 4-amino-4-deoxy-L-arabinose-phosphoundecaprenol flippase subunit ArnF (128 aa).

Over Met-1–Cys-2 the chain is Cytoplasmic. Residues Leu-3 to Ala-23 traverse the membrane as a helical segment. At Ala-24–Asp-35 the chain is on the periplasmic side. Residues Phe-36–Gly-56 traverse the membrane as a helical segment. The Cytoplasmic portion of the chain corresponds to Tyr-57–Ala-76. The chain crosses the membrane as a helical span at residues Tyr-77–Trp-97. Over Glu-98–Thr-100 the chain is Periplasmic. The helical transmembrane segment at Phe-101 to Leu-121 threads the bilayer. Residues Pro-122–Tyr-128 are Cytoplasmic-facing.

Belongs to the ArnF family. Heterodimer of ArnE and ArnF.

It localises to the cell inner membrane. It participates in bacterial outer membrane biogenesis; lipopolysaccharide biosynthesis. Translocates 4-amino-4-deoxy-L-arabinose-phosphoundecaprenol (alpha-L-Ara4N-phosphoundecaprenol) from the cytoplasmic to the periplasmic side of the inner membrane. This is Probable 4-amino-4-deoxy-L-arabinose-phosphoundecaprenol flippase subunit ArnF from Shigella flexneri.